The following is a 384-amino-acid chain: MIISSSNDYREAAKRRLPPFLFHYIDGGAYAEYTLKRNVEDLSQIALRQRVLNDMSSLSLETKLFNETLSMPVALSPVGLTGMYARRGEVQAAVAADKKGIPFTMSTVSVCPIEEVTPAIKRPMWFQLYVLRDRGFMKNALERAKAAGCSTLVFTVDMPVPGARYRDAHSGMSGPNAAMRRYLQSMMHPQWAWDVGLLGRPHDLGNISKYLGKTTGLEDYISWLGSNFDPSISWKDLEWIREFWDGPMVIKGILDPEDAKDAVRFGADGIVVSNHGGRQLDGVMSSARAMPAIAEAVKGDLTILADSGIRNGLDVVRMLALGADSVMLGRAFIYALAAQGGQGVSNLLDLIDKEMRVAMTLTGAKTIADINESCLVEMNKLIQS.

The 380-residue stretch at 1-380 folds into the FMN hydroxy acid dehydrogenase domain; it reads MIISSSNDYR…NESCLVEMNK (380 aa). Y24 provides a ligand contact to substrate. Positions 106 and 127 each coordinate FMN. Residue Y129 participates in substrate binding. Residue T155 participates in FMN binding. R164 contributes to the substrate binding site. K251 is an FMN binding site. Residue H275 is the Proton acceptor of the active site. R278 lines the substrate pocket. FMN is bound at residue 306–330; the sequence is DSGIRNGLDVVRMLALGADSVMLGR.

Belongs to the FMN-dependent alpha-hydroxy acid dehydrogenase family. FMN serves as cofactor.

It is found in the cell inner membrane. The enzyme catalyses (S)-lactate + A = pyruvate + AH2. Its function is as follows. Catalyzes the conversion of L-lactate to pyruvate. Is coupled to the respiratory chain. This is L-lactate dehydrogenase from Acinetobacter baylyi (strain ATCC 33305 / BD413 / ADP1).